A 1043-amino-acid polypeptide reads, in one-letter code: Chitin synthase 2 (1043 aa).

Positions 1-10 (MAQESSNMDQ) are enriched in polar residues. Disordered regions lie at residues 1 to 133 (MAQE…PRRP) and 215 to 234 (ESDFNVHYGPAPTGRQERRG). Residues 11–21 (SKSDNVTDNKP) are compositionally biased toward basic and acidic residues. Residues 43 to 58 (SASTSSLPTSRPSSSP) show a composition bias toward low complexity. Polar residues-rich tracts occupy residues 59–73 (GQSPNITPSILTSDT) and 81–93 (VSPTRPWTPSRGS). The next 6 helical transmembrane spans lie at 663-683 (FVSLAFTFFSLANFYLTFYFI), 703-723 (IFAILRYTCVLLICLQFVLSM), 738-758 (MIIYCIIMMYTVFSALYMVVM), 780-800 (YIIVSTLSTVGLYFFMSFLYL), 907-927 (YMVSVWFIANAILAMAVSEAF), and 931-951 (SVGNNAYLAFVLWSVASLAVF).

It belongs to the chitin synthase family. Class II subfamily.

Its subcellular location is the cell membrane. The catalysed reaction is [(1-&gt;4)-N-acetyl-beta-D-glucosaminyl](n) + UDP-N-acetyl-alpha-D-glucosamine = [(1-&gt;4)-N-acetyl-beta-D-glucosaminyl](n+1) + UDP + H(+). Functionally, polymerizes chitin, a structural polymer of the cell wall and septum, by transferring the sugar moiety of UDP-GlcNAc to the non-reducing end of the growing chitin polymer. The protein is Chitin synthase 2 (CHS2) of Paracoccidioides brasiliensis.